Here is a 964-residue protein sequence, read N- to C-terminus: uncharacterized protein (964 aa).

Residues 97 to 117 (DSESDVGSDAESDAESDAESD) show a composition bias toward acidic residues. The interval 97–208 (DSESDVGSDA…SNSIDNESES (112 aa)) is disordered. The segment covering 121–148 (HTQNNTNTPINNITLINLDSSNNSTQSD) has biased composition (low complexity). The span at 149–163 (NESDNESDNESDNES) shows a compositional bias: acidic residues. Over residues 192–203 (NSDNIGNSNSID) the composition is skewed to low complexity.

This is an uncharacterized protein from Acanthamoeba polyphaga (Amoeba).